A 204-amino-acid polypeptide reads, in one-letter code: Thymidine kinase (204 aa).

ATP is bound by residues 15–22 (GSMFSGKS) and 88–91 (DEVQ). The Proton acceptor role is filled by Glu-89. Positions 145, 148, 183, and 186 each coordinate Zn(2+).

This sequence belongs to the thymidine kinase family. As to quaternary structure, homotetramer.

Its subcellular location is the cytoplasm. It carries out the reaction thymidine + ATP = dTMP + ADP + H(+). This is Thymidine kinase from Halalkalibacterium halodurans (strain ATCC BAA-125 / DSM 18197 / FERM 7344 / JCM 9153 / C-125) (Bacillus halodurans).